The primary structure comprises 389 residues: Phospho-N-acetylmuramoyl-pentapeptide-transferase (389 aa).

The next 10 membrane-spanning stretches (helical) occupy residues 25–45 (RAVA…PWVI), 73–93 (TMGG…WADL), 97–117 (FIWI…VDDY), 135–155 (FWQS…VSEA), 189–209 (SMTY…VIVG), 222–242 (GLVI…AYVM), 259–279 (AGEM…FLWF), 286–306 (VFMG…IAVI), 311–331 (IVLF…MLQV), and 366–386 (QVVV…LSTL).

Belongs to the glycosyltransferase 4 family. MraY subfamily. Mg(2+) serves as cofactor.

It is found in the cell inner membrane. The enzyme catalyses UDP-N-acetyl-alpha-D-muramoyl-L-alanyl-gamma-D-glutamyl-meso-2,6-diaminopimeloyl-D-alanyl-D-alanine + di-trans,octa-cis-undecaprenyl phosphate = di-trans,octa-cis-undecaprenyl diphospho-N-acetyl-alpha-D-muramoyl-L-alanyl-D-glutamyl-meso-2,6-diaminopimeloyl-D-alanyl-D-alanine + UMP. The protein operates within cell wall biogenesis; peptidoglycan biosynthesis. Its function is as follows. Catalyzes the initial step of the lipid cycle reactions in the biosynthesis of the cell wall peptidoglycan: transfers peptidoglycan precursor phospho-MurNAc-pentapeptide from UDP-MurNAc-pentapeptide onto the lipid carrier undecaprenyl phosphate, yielding undecaprenyl-pyrophosphoryl-MurNAc-pentapeptide, known as lipid I. The protein is Phospho-N-acetylmuramoyl-pentapeptide-transferase of Paraburkholderia phymatum (strain DSM 17167 / CIP 108236 / LMG 21445 / STM815) (Burkholderia phymatum).